Reading from the N-terminus, the 337-residue chain is Ornithine carbamoyltransferase, catabolic (337 aa).

Carbamoyl phosphate is bound by residues 57 to 60, Q84, R108, and 135 to 138; these read STRT and HPTQ. L-ornithine is bound by residues N167, D231, and 235-236; that span reads SM. Residues 272–273 and R317 each bind carbamoyl phosphate; that span reads CL.

The protein belongs to the aspartate/ornithine carbamoyltransferase superfamily. OTCase family.

The protein resides in the cytoplasm. It catalyses the reaction carbamoyl phosphate + L-ornithine = L-citrulline + phosphate + H(+). The protein operates within amino-acid degradation; L-arginine degradation via ADI pathway; carbamoyl phosphate from L-arginine: step 2/2. Functionally, reversibly catalyzes the transfer of the carbamoyl group from carbamoyl phosphate (CP) to the N(epsilon) atom of ornithine (ORN) to produce L-citrulline. This chain is Ornithine carbamoyltransferase, catabolic, found in Streptococcus ratti.